A 1627-amino-acid chain; its full sequence is MQKIQHVQPGLSTSEIAPATLAKTSLSQGNSTSASQKGAQSLIQQGLHDKNKPPELEQGNGSSVRSQDSRSTTLRELFSSEGASQSAPRAPRDSLASGGPIQSLPRFASAEAAEIKISGSTTSTPAAKSDITLDSHGKLQFGKGLPEALTTLLQQTIGKNSQPFVAHHENQDAQQHALADKSGRLFVIQSDDNQHIALHSSGRSAMPAGKLSSNNVQLESTPERIALKTTAGESTSMPLSGRMNHELLTGVHRQPTSASGAGEQLRLHDGKLFALNTEFGVWQQSSDVAHSQLSRQGDGQLYAVKDDHTLSNLSSGTASSTFSDKITAFSANQNGQSAVLTEQDHLTQLHLMSTLDATPQPVALKLENGDPVFAKAVNLTAEHLLIADNDGKLYHAPLPKAGEPHATLTPASTPELNAVLGDDHRITGFAHDEHGQTQALATDRQGQKHVAPLGQNGLSPTPGWNLSDSLVVDNKLGLTTAAPEAKDTLDLGRLGQIGLQEGKVHFYNGNTKNWEASSVEASQLKRGLDNQAYTLKDGEIKPLSINQKSDTFAHGDNTVFALPQVRMTPSAGTALPGIDKDDGVSAMAVINRNKFIAVDKQGDLHFHQIKPGTDKIAAPPLALPKNGLSGEIQDITLDHQQTLFALNKDGQLFQLPKTDWQNAANHDSAQWQPVKTPVEGKVSSLGTDAQHHLQIAHDDHELHTQQGNAWKTTVPKGEAPLPAEPRDAETVFGRLDVATKGMKIPLTGVTVKADFQVLGKTGEDSQQVKSKLSDLLRAHLVSFTLDMPRPIKTFADHVQHQLNGREGLKPVYDMQTELLKKLDATTSQPQGTVTDLATKIDKLDLGDKGKPLVNLLKQFHTELESSSAKAALLIGRQQGVVNDNGVMNTEGKPASLHSREKDLAPVLLAAMESHPSSKTSTAATLLKTFVDSKTPIAQKPNSEAFGQQRDTSDALSLAKTRLVLDTLALGDLHKLTDRIGALSGTSPGEAALASMMKELNAMRQGNYGENPVKKMTDMGFTNHKSLEADYDSVKTFMKAFRKEDNAVSVTSKTVMQAASQTDMIDKMKSTVLSLDSNESIAFNRTYGGGASMSFVVSGTPLPFPPVPGGGVSGERNYNLSFSRGENGINVAFERSGGITGKVSYSGGYDVSEYLTGKTSAQMTQDINSKHSFAPDVRASFGVSASLQVAQQNALNFTLSEEELPGFIDGLSSGTINPLALLDKGEQHSVKAGKTVSFNLDGNAALELRGGINLTEKGAAPTSATLRGSVGVTASANVLSATSSSSVAQGEKSTTYTESDNRLRFMNQAAMGANATLSAGAARTTPDGTVPFFTSASIGVNVAADSRTNQSISLGMKKAEPLEKKDIDALTKTLNSAFNDPASQLLIDGVKKMAEPDDQLAILNTHFADKTAKTDDQHQGLMSLKKLNVRQDVAQRDGATLDSVKHTTSYTNLSKLTENGLFQVIGNHLFSSLPPSNADRINQLIADNPALKDIVSRLQDNDRASVTVSLELKDDVREKIEKGIQNKTHGKDDVIALFKDGNNLRLASIEVSKAVKKSEGFNTPAVIINASSRAGVSMNKLLGNVSFSYGQDQTVPQSYKLSGEIAKANPATTNALQQLQQEGLQLNG.

2 stretches are compositionally biased toward polar residues: residues 22–44 (AKTSLSQGNSTSASQKGAQSLIQ) and 59–74 (GNGSSVRSQDSRSTTL). 2 disordered regions span residues 22–102 (AKTS…GPIQ) and 436–464 (QTQALATDRQGQKHVAPLGQNGLSPTPGW). Short sequence motifs (wxxxE) lie at residues 464 to 468 (WNLSD), 514 to 520 (WEASSVE), and 660 to 667 (WQNAANHD).

This sequence belongs to the AvrE family.

The protein localises to the secreted. Its subcellular location is the host cell. In terms of biological role, major virulence factor that may function as a water- and solute-permeable channel dedicated to creating osmotic/water potential perturbation and a water- and nutrient-rich apoplast in which bacteria multiply within the infected plant tissues. Its function is as follows. Required for plant cell death in N.benthamiana leaves and leaf cell death in S.tuberosum. Essential for pathogenicity. Does not suppress callose formation. The protein is Type III effector DspE of Pectobacterium carotovorum (Erwinia carotovora).